Here is a 93-residue protein sequence, read N- to C-terminus: Large ribosomal subunit protein uL23 (93 aa).

It belongs to the universal ribosomal protein uL23 family. As to quaternary structure, part of the 50S ribosomal subunit. Contacts protein L29, and trigger factor when it is bound to the ribosome.

Its function is as follows. One of the early assembly proteins it binds 23S rRNA. One of the proteins that surrounds the polypeptide exit tunnel on the outside of the ribosome. Forms the main docking site for trigger factor binding to the ribosome. The chain is Large ribosomal subunit protein uL23 from Aliarcobacter butzleri (strain RM4018) (Arcobacter butzleri).